Consider the following 175-residue polypeptide: Protein UPS1, mitochondrial (175 aa).

The tract at residues 1–80 (MVLLHKSTHI…RGITETWIIE (80 aa)) is required for mitochondrial targeting. The PRELI/MSF1 domain occupies 2-172 (VLLHKSTHIF…VIQKLEEARN (171 aa)). Residues Y26, K58, K148, and N152 each coordinate a 1,2-diacyl-sn-glycero-3-phosphate.

The protein belongs to the slowmo family. In terms of assembly, interacts with MDM35. Found associated with a 170 kDa complex.

The protein localises to the mitochondrion inner membrane. It is found in the mitochondrion intermembrane space. Required for maintenance of normal mitochondrial morphology. Required for PCP1-dependent processing of MGM1. The UPS1:MDM35 complex mediates the transfer of phosphatidic acid (PA) between liposomes and probably functions as a PA transporter across the mitochondrion intermembrane space. Phosphatidic acid release requires dissociation of the UPS1:MDM35 complex. Phosphatidic acid import is required for cardiolipin (CL) synthesis in the mitochondrial inner membrane. With UPS2, controls the level of cardiolipin in mitochondria. Cardiolipin is a unique phospholipid with four fatty acid chains and is present mainly in the mitochondrial inner membrane where it stabilizes the electron transport chain supercomplex between complexes III and IV through direct interaction of their subunits. The protein is Protein UPS1, mitochondrial (UPS1) of Saccharomyces cerevisiae (strain ATCC 204508 / S288c) (Baker's yeast).